Reading from the N-terminus, the 833-residue chain is DNA gyrase subunit A (833 aa).

The Topo IIA-type catalytic domain occupies leucine 34–isoleucine 500. Tyrosine 122 acts as the O-(5'-phospho-DNA)-tyrosine intermediate in catalysis. The short motif at glutamine 527–glycine 533 is the GyrA-box element.

The protein belongs to the type II topoisomerase GyrA/ParC subunit family. As to quaternary structure, heterotetramer, composed of two GyrA and two GyrB chains. In the heterotetramer, GyrA contains the active site tyrosine that forms a transient covalent intermediate with DNA, while GyrB binds cofactors and catalyzes ATP hydrolysis.

Its subcellular location is the cytoplasm. The catalysed reaction is ATP-dependent breakage, passage and rejoining of double-stranded DNA.. In terms of biological role, a type II topoisomerase that negatively supercoils closed circular double-stranded (ds) DNA in an ATP-dependent manner to modulate DNA topology and maintain chromosomes in an underwound state. Negative supercoiling favors strand separation, and DNA replication, transcription, recombination and repair, all of which involve strand separation. Also able to catalyze the interconversion of other topological isomers of dsDNA rings, including catenanes and knotted rings. Type II topoisomerases break and join 2 DNA strands simultaneously in an ATP-dependent manner. This Chlamydia muridarum (strain MoPn / Nigg) protein is DNA gyrase subunit A.